The sequence spans 504 residues: Peptidyl-prolyl cis-trans isomerase CYP57 (504 aa).

Ser-2 carries the N-acetylserine modification. Positions 16–167 constitute a PPIase cyclophilin-type domain; it reads IVNTTHGPID…DPAPKILSVE (152 aa). The stretch at 204-274 forms a coiled coil; that stretch reads NLLSFGEEAE…AKKEAAQKDK (71 aa). Basic and acidic residues-rich tracts occupy residues 237 to 275, 344 to 354, and 364 to 374; these read RLLK…KDKS, EDEKPRMEKLS, and AKAEHMEKGDT. 3 disordered regions span residues 237-374, 416-441, and 482-504; these read RLLK…KGDT, AKPF…KEED, and EKFN…KSLA. The segment covering 416 to 434 has biased composition (polar residues); that stretch reads AKPFTSSNEPVVLTSSSEP. Basic and acidic residues predominate over residues 494–504; sequence REREWSGKSLA.

It belongs to the cyclophilin-type PPIase family. As to expression, ubiquitous.

Its subcellular location is the nucleus. It is found in the cytoplasm. The enzyme catalyses [protein]-peptidylproline (omega=180) = [protein]-peptidylproline (omega=0). In terms of biological role, PPIases accelerate the folding of proteins. It catalyzes the cis-trans isomerization of proline imidic peptide bonds in oligopeptides. Involved in plant response to pathogen infection by increasing PAD4 expression in absence of EDS1 up-regulation. This Arabidopsis thaliana (Mouse-ear cress) protein is Peptidyl-prolyl cis-trans isomerase CYP57 (CYP57).